The primary structure comprises 130 residues: Small ribosomal subunit protein uS8 (130 aa).

It belongs to the universal ribosomal protein uS8 family. In terms of assembly, part of the 30S ribosomal subunit.

One of the primary rRNA binding proteins, it binds directly to 16S rRNA central domain where it helps coordinate assembly of the platform of the 30S subunit. The polypeptide is Small ribosomal subunit protein uS8 (Halorubrum lacusprofundi (strain ATCC 49239 / DSM 5036 / JCM 8891 / ACAM 34)).